A 115-amino-acid polypeptide reads, in one-letter code: Salivary anti-complement protein (115 aa).

The N-terminal stretch at 1 to 22 (MKFFYLIFSAIFFLADPALVKC) is a signal peptide. Cystine bridges form between Cys-26-Cys-108, Cys-41-Cys-92, and Cys-83-Cys-101.

May form multimers. Salivary gland (at protein level).

It localises to the secreted. Salivary protein that inhibits the classical pathway of complement system activation in the host while having no inhibitory effect on the alternative or lectin pathways. Prevent cleavage of host C4 and consequently impairs the activation of factors downstream of C4b in the complement cascade. The protein is Salivary anti-complement protein of Lutzomyia longipalpis (Sand fly).